Reading from the N-terminus, the 245-residue chain is Cytochrome P450 CYP82H23 (245 aa).

Belongs to the cytochrome P450 family. It depends on heme as a cofactor.

Functionally, probable heme-thiolate monooxygenase. This chain is Cytochrome P450 CYP82H23, found in Panax ginseng (Korean ginseng).